A 230-amino-acid chain; its full sequence is Cytidylate kinase (230 aa).

An ATP-binding site is contributed by 12–20 (GPSGAGKGT).

The protein belongs to the cytidylate kinase family. Type 1 subfamily.

The protein resides in the cytoplasm. It catalyses the reaction CMP + ATP = CDP + ADP. The catalysed reaction is dCMP + ATP = dCDP + ADP. This chain is Cytidylate kinase, found in Shewanella pealeana (strain ATCC 700345 / ANG-SQ1).